The following is a 539-amino-acid chain: DNA damage-binding protein CMR1 (539 aa).

A disordered region spans residues 22 to 89 (LNLPTEAKKE…ALKQEDLGGS (68 aa)). Residues 27 to 39 (EAKKESVDPEVAP) show a composition bias toward basic and acidic residues. WD repeat units follow at residues 182 to 223 (VTKE…EPLQ), 226 to 268 (LHHA…DVLD), 316 to 356 (LGEK…TART), 377 to 415 (NSRL…LDML), 462 to 505 (GRWV…LAHL), and 508 to 539 (ALMT…YWWE).

The protein belongs to the WD repeat DDB2/WDR76 family.

Its function is as follows. DNA-binding protein that binds to both single- and double-stranded DNA. Binds preferentially to UV-damaged DNA. May be involved in DNA-metabolic processes. This Yarrowia lipolytica (strain CLIB 122 / E 150) (Yeast) protein is DNA damage-binding protein CMR1.